The chain runs to 86 residues: DNA-directed RNA polymerase subunit omega (86 aa).

Residues 67–76 (SAREHAKESQ) are compositionally biased toward basic and acidic residues. The segment at 67 to 86 (SAREHAKESQVSEEEVREES) is disordered. The span at 77 to 86 (VSEEEVREES) shows a compositional bias: acidic residues.

The protein belongs to the RNA polymerase subunit omega family. As to quaternary structure, the RNAP catalytic core consists of 2 alpha, 1 beta, 1 beta' and 1 omega subunit. When a sigma factor is associated with the core the holoenzyme is formed, which can initiate transcription.

The catalysed reaction is RNA(n) + a ribonucleoside 5'-triphosphate = RNA(n+1) + diphosphate. Functionally, promotes RNA polymerase assembly. Latches the N- and C-terminal regions of the beta' subunit thereby facilitating its interaction with the beta and alpha subunits. The polypeptide is DNA-directed RNA polymerase subunit omega (Nitrosococcus oceani (strain ATCC 19707 / BCRC 17464 / JCM 30415 / NCIMB 11848 / C-107)).